Here is a 144-residue protein sequence, read N- to C-terminus: Crossover junction endodeoxyribonuclease Hjc (144 aa).

E12 is a binding site for Mg(2+). The active site involves S32. Residues D42 and E55 each contribute to the Mg(2+) site.

Belongs to the Holliday junction resolvase Hjc family. As to quaternary structure, homodimer; forms a 2:1 complex with Hel308 (Hjm). May form a complex with Holliday junction DNA, Hjc and Hjm. The cofactor is Mg(2+).

The catalysed reaction is Endonucleolytic cleavage at a junction such as a reciprocal single-stranded crossover between two homologous DNA duplexes (Holliday junction).. Its activity is regulated as follows. Cleavage stimulated by PCNA123 and PCNA323 and by RadC2. A structure-specific endonuclease that resolves Holliday junction (HJ) intermediates during genetic recombination. Cleaves 4-way DNA junctions introducing paired nicks in opposing strands, leaving a 5'-terminal phosphate and a 3'-terminal hydroxyl group that are subsequently ligated to produce recombinant products. Inhibits the helicase activity of Hel308 (Hjm). This Sulfurisphaera tokodaii (strain DSM 16993 / JCM 10545 / NBRC 100140 / 7) (Sulfolobus tokodaii) protein is Crossover junction endodeoxyribonuclease Hjc.